Here is a 41-residue protein sequence, read N- to C-terminus: Large ribosomal subunit protein bL36 (41 aa).

It belongs to the bacterial ribosomal protein bL36 family.

The chain is Large ribosomal subunit protein bL36 from Rhodopseudomonas palustris (strain TIE-1).